A 154-amino-acid polypeptide reads, in one-letter code: UPF0178 protein GDI0551/Gdia_1457 (154 aa).

It belongs to the UPF0178 family.

The polypeptide is UPF0178 protein GDI0551/Gdia_1457 (Gluconacetobacter diazotrophicus (strain ATCC 49037 / DSM 5601 / CCUG 37298 / CIP 103539 / LMG 7603 / PAl5)).